Here is a 304-residue protein sequence, read N- to C-terminus: MADEQQFIEDGLQRTQIDEFFAEELGRAGYGGMDVAKTPMGTQIVLKAEKPGMVIGKGGKNIRKITTELEDRFNLDDPQVDVQEVDEPDLNARIVADRLANALERGWYFRKAGHTTIDRIMESGALGAEIVLSGKVTGARSRVEKFNRGYVKHNGEPAEEIVDSGVGVAVMKLGTIGVRVKIIPPNAELPDDFEIYEDVDVEDYVADTDGESVEELLEGEPEDSETAEELDEDVAAGADDDSEADEEFVDEEIVEEDVEVPTDDDVEDVDVDELEEAVDEELDEDVEAEAEELMDEMDEEGDDE.

The KH type-2 domain occupies 17–86; that stretch reads IDEFFAEELG…DPQVDVQEVD (70 aa). Residues 216-304 form a disordered region; that stretch reads LLEGEPEDSE…DEMDEEGDDE (89 aa).

The protein belongs to the universal ribosomal protein uS3 family. As to quaternary structure, part of the 30S ribosomal subunit.

Binds the lower part of the 30S subunit head. The chain is Small ribosomal subunit protein uS3 from Haloarcula marismortui (strain ATCC 43049 / DSM 3752 / JCM 8966 / VKM B-1809) (Halobacterium marismortui).